Consider the following 64-residue polypeptide: MKAKEINELTTAEMLEKEKQFKEELFNLRFQLATGQLENTARLKEVRKNIARIKTALRQQELNK.

Belongs to the universal ribosomal protein uL29 family.

This Ligilactobacillus salivarius (strain UCC118) (Lactobacillus salivarius) protein is Large ribosomal subunit protein uL29.